Consider the following 629-residue polypeptide: tRNA uridine 5-carboxymethylaminomethyl modification enzyme MnmG (629 aa).

Residues 13-18 (GGGHAG), Val-125, and Ser-180 each bind FAD. Residue 273 to 287 (GPRYCPSIEDKVMRF) participates in NAD(+) binding. Gln-370 lines the FAD pocket.

This sequence belongs to the MnmG family. As to quaternary structure, homodimer. Heterotetramer of two MnmE and two MnmG subunits. Requires FAD as cofactor.

The protein resides in the cytoplasm. Functionally, NAD-binding protein involved in the addition of a carboxymethylaminomethyl (cmnm) group at the wobble position (U34) of certain tRNAs, forming tRNA-cmnm(5)s(2)U34. This chain is tRNA uridine 5-carboxymethylaminomethyl modification enzyme MnmG, found in Serratia proteamaculans (strain 568).